A 433-amino-acid polypeptide reads, in one-letter code: GTPase Der (433 aa).

EngA-type G domains lie at 5–167 (KKVL…GEVG) and 174–349 (IKVG…DQLE). Residues 11-18 (GRPNVGKS), 58-62 (DTGGF), 119-122 (NKVD), 180-187 (GKPNSGKS), 227-231 (DTAGI), and 292-295 (SKWD) each bind GTP. The 81-residue stretch at 349–429 (ELKTSTPDLN…PILVELKEKI (81 aa)) folds into the KH-like domain.

The protein belongs to the TRAFAC class TrmE-Era-EngA-EngB-Septin-like GTPase superfamily. EngA (Der) GTPase family. In terms of assembly, associates with the 50S ribosomal subunit.

GTPase that plays an essential role in the late steps of ribosome biogenesis. The polypeptide is GTPase Der (Borreliella burgdorferi (strain ATCC 35210 / DSM 4680 / CIP 102532 / B31) (Borrelia burgdorferi)).